Reading from the N-terminus, the 314-residue chain is Homoserine kinase (314 aa).

Pro-96–Cys-106 contributes to the ATP binding site.

The protein belongs to the GHMP kinase family. Homoserine kinase subfamily.

The protein localises to the cytoplasm. The enzyme catalyses L-homoserine + ATP = O-phospho-L-homoserine + ADP + H(+). The protein operates within amino-acid biosynthesis; L-threonine biosynthesis; L-threonine from L-aspartate: step 4/5. In terms of biological role, catalyzes the ATP-dependent phosphorylation of L-homoserine to L-homoserine phosphate. The polypeptide is Homoserine kinase (Histophilus somni (strain 129Pt) (Haemophilus somnus)).